Here is a 142-residue protein sequence, read N- to C-terminus: MAKKVDGYIKLQVAAGAANPSPPVGPALGQKGVNIMEFCKAFNARTEKFEKGMPIPVVITVYSDRSFTFETKTPPASFLLLKAAGLKSGSGRPNTEKVGTIKRSAVQEIAETKAADMTGADIEAMTRSIEGTARSMGLVVED.

This sequence belongs to the universal ribosomal protein uL11 family. Part of the ribosomal stalk of the 50S ribosomal subunit. Interacts with L10 and the large rRNA to form the base of the stalk. L10 forms an elongated spine to which L12 dimers bind in a sequential fashion forming a multimeric L10(L12)X complex. In terms of processing, one or more lysine residues are methylated.

Forms part of the ribosomal stalk which helps the ribosome interact with GTP-bound translation factors. In Shewanella pealeana (strain ATCC 700345 / ANG-SQ1), this protein is Large ribosomal subunit protein uL11.